The chain runs to 143 residues: Large ribosomal subunit protein uL11 (143 aa).

Belongs to the universal ribosomal protein uL11 family. In terms of assembly, part of the ribosomal stalk of the 50S ribosomal subunit. Interacts with L10 and the large rRNA to form the base of the stalk. L10 forms an elongated spine to which L12 dimers bind in a sequential fashion forming a multimeric L10(L12)X complex. One or more lysine residues are methylated.

In terms of biological role, forms part of the ribosomal stalk which helps the ribosome interact with GTP-bound translation factors. In Acidovorax ebreus (strain TPSY) (Diaphorobacter sp. (strain TPSY)), this protein is Large ribosomal subunit protein uL11.